Consider the following 599-residue polypeptide: Elongation factor 4 (599 aa).

The tr-type G domain maps to 5–187 (AHIRNFSIVA…AIVKHLPAPK (183 aa)). Residues 17–22 (DHGKST) and 134–137 (NKID) each bind GTP.

This sequence belongs to the TRAFAC class translation factor GTPase superfamily. Classic translation factor GTPase family. LepA subfamily.

It localises to the cell inner membrane. The catalysed reaction is GTP + H2O = GDP + phosphate + H(+). Functionally, required for accurate and efficient protein synthesis under certain stress conditions. May act as a fidelity factor of the translation reaction, by catalyzing a one-codon backward translocation of tRNAs on improperly translocated ribosomes. Back-translocation proceeds from a post-translocation (POST) complex to a pre-translocation (PRE) complex, thus giving elongation factor G a second chance to translocate the tRNAs correctly. Binds to ribosomes in a GTP-dependent manner. The protein is Elongation factor 4 of Ruegeria pomeroyi (strain ATCC 700808 / DSM 15171 / DSS-3) (Silicibacter pomeroyi).